The primary structure comprises 449 residues: Sensor protein QseC (449 aa).

Over 1–12 (MKFTQRLSLRVR) the chain is Cytoplasmic. A helical transmembrane segment spans residues 13–33 (LTLIFLILASVTWLLSSFVAW). Residues 34–156 (KQTTDNVDEL…QEWEYREDMA (123 aa)) are Periplasmic-facing. The helical transmembrane segment at 157 to 177 (LAIVAGQLIPWLVALPVMLII) threads the bilayer. The Cytoplasmic portion of the chain corresponds to 178 to 449 (MMVLLGRELA…QGGFEAKVSW (272 aa)). A Histidine kinase domain is found at 243–449 (DAAHELRSPL…QGGFEAKVSW (207 aa)). The residue at position 246 (His246) is a Phosphohistidine; by autocatalysis.

It localises to the cell inner membrane. The catalysed reaction is ATP + protein L-histidine = ADP + protein N-phospho-L-histidine.. Its function is as follows. Member of a two-component regulatory system QseB/QseC. Activates the flagella regulon by activating transcription of FlhDC. May activate QseB by phosphorylation. The sequence is that of Sensor protein QseC (qseC) from Escherichia coli O157:H7.